The sequence spans 237 residues: Ribonuclease PH (237 aa).

Phosphate contacts are provided by residues Arg86 and 124 to 126; that span reads GTR.

Belongs to the RNase PH family. Homohexameric ring arranged as a trimer of dimers.

It carries out the reaction tRNA(n+1) + phosphate = tRNA(n) + a ribonucleoside 5'-diphosphate. Functionally, phosphorolytic 3'-5' exoribonuclease that plays an important role in tRNA 3'-end maturation. Removes nucleotide residues following the 3'-CCA terminus of tRNAs; can also add nucleotides to the ends of RNA molecules by using nucleoside diphosphates as substrates, but this may not be physiologically important. Probably plays a role in initiation of 16S rRNA degradation (leading to ribosome degradation) during starvation. This Methylorubrum populi (strain ATCC BAA-705 / NCIMB 13946 / BJ001) (Methylobacterium populi) protein is Ribonuclease PH.